We begin with the raw amino-acid sequence, 350 residues long: tRNA uridine(34) hydroxylase (350 aa).

In terms of domain architecture, Rhodanese spans aspartate 146–leucine 240. Cysteine 200 serves as the catalytic Cysteine persulfide intermediate. Positions arginine 319–glycine 328 are enriched in basic and acidic residues. Residues arginine 319–glutamate 350 form a disordered region.

Belongs to the TrhO family.

The enzyme catalyses uridine(34) in tRNA + AH2 + O2 = 5-hydroxyuridine(34) in tRNA + A + H2O. In terms of biological role, catalyzes oxygen-dependent 5-hydroxyuridine (ho5U) modification at position 34 in tRNAs. This Salmonella schwarzengrund (strain CVM19633) protein is tRNA uridine(34) hydroxylase.